The following is a 372-amino-acid chain: Chaperone protein DnaJ (372 aa).

Positions 5–70 (DYYDLLEVGR…EKRAGYDRYG (66 aa)) constitute a J domain. The segment at 134–212 (GIQAPIHYVT…CGGSGRRRDE (79 aa)) adopts a CR-type zinc-finger fold. Residues Cys147, Cys150, Cys164, Cys167, Cys186, Cys189, Cys200, and Cys203 each coordinate Zn(2+). CXXCXGXG motif repeat units lie at residues 147–154 (CDTCQGTG), 164–171 (CHTCQGSG), 186–193 (CTTCYGEG), and 200–207 (CKKCGGSG).

It belongs to the DnaJ family. Homodimer. Zn(2+) serves as cofactor.

It localises to the cytoplasm. Participates actively in the response to hyperosmotic and heat shock by preventing the aggregation of stress-denatured proteins and by disaggregating proteins, also in an autonomous, DnaK-independent fashion. Unfolded proteins bind initially to DnaJ; upon interaction with the DnaJ-bound protein, DnaK hydrolyzes its bound ATP, resulting in the formation of a stable complex. GrpE releases ADP from DnaK; ATP binding to DnaK triggers the release of the substrate protein, thus completing the reaction cycle. Several rounds of ATP-dependent interactions between DnaJ, DnaK and GrpE are required for fully efficient folding. Also involved, together with DnaK and GrpE, in the DNA replication of plasmids through activation of initiation proteins. The chain is Chaperone protein DnaJ from Wolbachia sp. subsp. Drosophila simulans (strain wRi).